Consider the following 28-residue polypeptide: Cruzioseptin-4 (28 aa).

The residue at position 25 (glutamate 25) is a Glutamic acid 1-amide. A propeptide spanning residues 27 to 28 (EH) is cleaved from the precursor.

In terms of tissue distribution, expressed by the skin glands.

It localises to the secreted. Has antimicrobial activity. This Cruziohyla calcarifer (Splendid leaf frog) protein is Cruzioseptin-4.